A 331-amino-acid chain; its full sequence is MEPEFLYDLLQLPKGVEPPAEEELSKGGKKKYLPPTSRKDPKFEELQKVLMEWINATLLPEHIVVRSLEEDMFDGLILHHLFQRLAALKLEAEDIALTATSQKHKLTVVLEAVNRSLQLEEWQAKWSVESIFNKDLLSTLHLLVALAKRFQPDLSLPTNVQVEVITIESTKSGLKSEKLVEQLTEYSTDKDEPPKDVFDELFKLAPEKVNAVKEAIVNFVNQKLDRLGLSVQNLDTQFADGVILLLLIGQLEGFFLHLKEFYLTPNSPAEMLHNVTLALELLKDEGLLSCPVSPEDIVNKDAKSTLRVLYGLFCKHTQKAHRDRTPHGAPN.

The residue at position 1 (M1) is an N-acetylmethionine. The tract at residues 17-39 is disordered; sequence EPPAEEELSKGGKKKYLPPTSRK. Calponin-homology (CH) domains are found at residues 44–151 and 210–317; these read EELQ…KRFQ and NAVK…CKHT.

The protein belongs to the parvin family. Interacts with ILK; the interaction promotes the establishment of cell polarity required for leukocyte migration. Interacts with ARHGEF6; the guanine nucleotide exchange factor activity of ARHGEF6 is essential for the PARVG-induced enhancement of cell spreading. Expressed predominantly in lymphoid organs, including spleen, thymus, lymph node, bone marrow and peripheral blood leukocytes and moderately in the digestive tract, including stomach, duodenum, jejunum, ileum, ileocecum and appendix, as well as in lung and liver. Also expressed in tumors, but at a lower level than in the corresponding normal tissues.

Its subcellular location is the cell junction. The protein localises to the focal adhesion. It localises to the cell membrane. It is found in the cytoplasm. The protein resides in the cytoskeleton. Its function is as follows. Plays a role with ILK in promoting the cell adhesion and spreading of leukocytes. The polypeptide is Gamma-parvin (PARVG) (Homo sapiens (Human)).